A 344-amino-acid polypeptide reads, in one-letter code: Glucan endo-1,3-beta-glucosidase (344 aa).

Positions 1–27 (MALTRNRPFVVVLLLGFVIMSTITIGA) are cleaved as a signal peptide. Glu-123 functions as the Proton donor in the catalytic mechanism. Glu-268 (nucleophile) is an active-site residue.

This sequence belongs to the glycosyl hydrolase 17 family.

It carries out the reaction Hydrolysis of (1-&gt;3)-beta-D-glucosidic linkages in (1-&gt;3)-beta-D-glucans.. In terms of biological role, implicated in the defense of plants against pathogens. In Vitis vinifera (Grape), this protein is Glucan endo-1,3-beta-glucosidase.